The following is a 58-amino-acid chain: MAVPKRKKSKSRRNMHRSHLALSAANVVIDPTTGEYKLPHHVCLGGYYNGKQVTESKV.

It belongs to the bacterial ribosomal protein bL32 family.

In Anaplasma marginale (strain Florida), this protein is Large ribosomal subunit protein bL32.